Consider the following 598-residue polypeptide: UvrABC system protein C (598 aa).

The 79-residue stretch at 13–91 (TLPGVYRMVD…IKGLKPRFNI (79 aa)) folds into the GIY-YIG domain. The UVR domain occupies 200 to 235 (TALTEEITAQMNAAAENLDFETAAYLRDRLRMLATV).

This sequence belongs to the UvrC family. As to quaternary structure, interacts with UvrB in an incision complex.

The protein localises to the cytoplasm. In terms of biological role, the UvrABC repair system catalyzes the recognition and processing of DNA lesions. UvrC both incises the 5' and 3' sides of the lesion. The N-terminal half is responsible for the 3' incision and the C-terminal half is responsible for the 5' incision. This is UvrABC system protein C from Thiobacillus denitrificans (strain ATCC 25259 / T1).